The following is a 552-amino-acid chain: Probable glucomannan 4-beta-mannosyltransferase 10 (552 aa).

A helical transmembrane segment spans residues 62–82 (IVPLFKCLVAFCLIISLLVFI). Aspartate 161 is a catalytic residue. The substrate site is built by aspartate 220 and aspartate 222. Aspartate 314 is a catalytic residue. 4 helical membrane-spanning segments follow: residues 393–413 (IIVH…SVFF), 430–450 (ITLC…FWIL), 509–529 (EIMV…FGNT), and 530–550 (LLYL…VGFV).

This sequence belongs to the glycosyltransferase 2 family. Plant cellulose synthase-like A subfamily.

The protein localises to the golgi apparatus membrane. The enzyme catalyses GDP-mannose + (glucomannan)n = GDP + (glucomannan)n+1.. In terms of biological role, probable mannan synthase which consists of a 4-beta-mannosyltransferase activity on mannan using GDP-mannose. The beta-1,4-mannan product is the backbone for galactomannan synthesis by galactomannan galactosyltransferase. Galactomannan is a noncellulosic polysaccharides of plant cell wall. This Arabidopsis thaliana (Mouse-ear cress) protein is Probable glucomannan 4-beta-mannosyltransferase 10.